Consider the following 452-residue polypeptide: Pup--protein ligase (452 aa).

Glu-9 is a binding site for Mg(2+). Arg-53 is an ATP binding site. Position 55 (Tyr-55) interacts with Mg(2+). Asp-57 (proton acceptor) is an active-site residue. Glu-63 is a binding site for Mg(2+). Thr-66 and Trp-419 together coordinate ATP.

It belongs to the Pup ligase/Pup deamidase family. Pup-conjugating enzyme subfamily.

It carries out the reaction ATP + [prokaryotic ubiquitin-like protein]-L-glutamate + [protein]-L-lysine = ADP + phosphate + N(6)-([prokaryotic ubiquitin-like protein]-gamma-L-glutamyl)-[protein]-L-lysine.. It functions in the pathway protein degradation; proteasomal Pup-dependent pathway. Its pathway is protein modification; protein pupylation. Catalyzes the covalent attachment of the prokaryotic ubiquitin-like protein modifier Pup to the proteasomal substrate proteins, thereby targeting them for proteasomal degradation. This tagging system is termed pupylation. The ligation reaction involves the side-chain carboxylate of the C-terminal glutamate of Pup and the side-chain amino group of a substrate lysine. This chain is Pup--protein ligase, found in Parafrankia sp. (strain EAN1pec).